The primary structure comprises 365 residues: tRNA/tmRNA (uracil-C(5))-methyltransferase (365 aa).

Glutamine 189, tyrosine 217, asparagine 222, glutamate 238, and aspartate 298 together coordinate S-adenosyl-L-methionine. Catalysis depends on cysteine 323, which acts as the Nucleophile. The Proton acceptor role is filled by glutamate 357.

It belongs to the class I-like SAM-binding methyltransferase superfamily. RNA M5U methyltransferase family. TrmA subfamily.

The catalysed reaction is uridine(54) in tRNA + S-adenosyl-L-methionine = 5-methyluridine(54) in tRNA + S-adenosyl-L-homocysteine + H(+). The enzyme catalyses uridine(341) in tmRNA + S-adenosyl-L-methionine = 5-methyluridine(341) in tmRNA + S-adenosyl-L-homocysteine + H(+). Dual-specificity methyltransferase that catalyzes the formation of 5-methyluridine at position 54 (m5U54) in all tRNAs, and that of position 341 (m5U341) in tmRNA (transfer-mRNA). This chain is tRNA/tmRNA (uracil-C(5))-methyltransferase, found in Shewanella frigidimarina (strain NCIMB 400).